Consider the following 78-residue polypeptide: Acyl carrier protein (78 aa).

The Carrier domain maps to Ser2–Met77. An O-(pantetheine 4'-phosphoryl)serine modification is found at Ser37.

This sequence belongs to the acyl carrier protein (ACP) family. 4'-phosphopantetheine is transferred from CoA to a specific serine of apo-ACP by AcpS. This modification is essential for activity because fatty acids are bound in thioester linkage to the sulfhydryl of the prosthetic group.

Its subcellular location is the cytoplasm. It functions in the pathway lipid metabolism; fatty acid biosynthesis. In terms of biological role, carrier of the growing fatty acid chain in fatty acid biosynthesis. This chain is Acyl carrier protein, found in Magnetococcus marinus (strain ATCC BAA-1437 / JCM 17883 / MC-1).